A 586-amino-acid polypeptide reads, in one-letter code: NudC domain-containing protein 1 (586 aa).

The 90-residue stretch at 275–364 (KREPLYNWQQ…EPGCTWAELV (90 aa)) folds into the CS domain.

The protein resides in the cytoplasm. The protein localises to the nucleus. The chain is NudC domain-containing protein 1 from Xenopus laevis (African clawed frog).